A 414-amino-acid chain; its full sequence is Enolase (414 aa).

Residue Q156 coordinates (2R)-2-phosphoglycerate. The active-site Proton donor is the E200. Residues D236, E281, and D308 each coordinate Mg(2+). Positions 333, 362, 363, and 384 each coordinate (2R)-2-phosphoglycerate. K333 acts as the Proton acceptor in catalysis.

This sequence belongs to the enolase family. Mg(2+) is required as a cofactor.

It is found in the cytoplasm. It localises to the secreted. The protein resides in the cell surface. The catalysed reaction is (2R)-2-phosphoglycerate = phosphoenolpyruvate + H2O. It functions in the pathway carbohydrate degradation; glycolysis; pyruvate from D-glyceraldehyde 3-phosphate: step 4/5. Catalyzes the reversible conversion of 2-phosphoglycerate (2-PG) into phosphoenolpyruvate (PEP). It is essential for the degradation of carbohydrates via glycolysis. This is Enolase from Methanosphaera stadtmanae (strain ATCC 43021 / DSM 3091 / JCM 11832 / MCB-3).